The chain runs to 268 residues: Tryptophan synthase alpha chain (268 aa).

Residues Glu49 and Asp60 each act as proton acceptor in the active site.

This sequence belongs to the TrpA family. Tetramer of two alpha and two beta chains.

The catalysed reaction is (1S,2R)-1-C-(indol-3-yl)glycerol 3-phosphate + L-serine = D-glyceraldehyde 3-phosphate + L-tryptophan + H2O. It participates in amino-acid biosynthesis; L-tryptophan biosynthesis; L-tryptophan from chorismate: step 5/5. Functionally, the alpha subunit is responsible for the aldol cleavage of indoleglycerol phosphate to indole and glyceraldehyde 3-phosphate. In Serratia proteamaculans (strain 568), this protein is Tryptophan synthase alpha chain.